Reading from the N-terminus, the 337-residue chain is Anthranilate phosphoribosyltransferase (337 aa).

5-phospho-alpha-D-ribose 1-diphosphate contacts are provided by residues Gly-81, 84–85 (GD), Ser-89, 91–94 (NVST), 109–117 (KHGNRAATS), and Ala-121. Gly-81 contributes to the anthranilate binding site. Residue Ser-93 coordinates Mg(2+). Asn-112 provides a ligand contact to anthranilate. Position 167 (Arg-167) interacts with anthranilate. Residues Asp-226 and Glu-227 each coordinate Mg(2+).

It belongs to the anthranilate phosphoribosyltransferase family. In terms of assembly, homodimer. Requires Mg(2+) as cofactor.

It catalyses the reaction N-(5-phospho-beta-D-ribosyl)anthranilate + diphosphate = 5-phospho-alpha-D-ribose 1-diphosphate + anthranilate. It participates in amino-acid biosynthesis; L-tryptophan biosynthesis; L-tryptophan from chorismate: step 2/5. In terms of biological role, catalyzes the transfer of the phosphoribosyl group of 5-phosphorylribose-1-pyrophosphate (PRPP) to anthranilate to yield N-(5'-phosphoribosyl)-anthranilate (PRA). The sequence is that of Anthranilate phosphoribosyltransferase from Methylorubrum extorquens (strain PA1) (Methylobacterium extorquens).